A 461-amino-acid polypeptide reads, in one-letter code: Ubiquinone hydroxylase UbiM (461 aa).

The protein belongs to the UbiH/COQ6 family. FAD is required as a cofactor.

It carries out the reaction a 2-(all-trans-polyprenyl)phenol + NADPH + O2 + H(+) = a 3-(all-trans-polyprenyl)benzene-1,2-diol + NADP(+) + H2O. The enzyme catalyses a 5-methoxy-2-methyl-3-(all-trans-polyprenyl)benzene-1,4-diol + AH2 + O2 = a 3-demethylubiquinol + A + H2O. The protein operates within cofactor biosynthesis; ubiquinone biosynthesis. Its function is as follows. Catalyzes the hydroxylation of three positions of the aromatic ring during ubiquinone biosynthesis. The chain is Ubiquinone hydroxylase UbiM from Neisseria meningitidis serogroup C / serotype 2a (strain ATCC 700532 / DSM 15464 / FAM18).